The chain runs to 197 residues: ATP-dependent Clp protease proteolytic subunit 1 (197 aa).

The active-site Nucleophile is the S96. H121 is a catalytic residue.

Belongs to the peptidase S14 family. As to quaternary structure, fourteen ClpP subunits assemble into 2 heptameric rings which stack back to back to give a disk-like structure with a central cavity, resembling the structure of eukaryotic proteasomes.

Its subcellular location is the cytoplasm. The enzyme catalyses Hydrolysis of proteins to small peptides in the presence of ATP and magnesium. alpha-casein is the usual test substrate. In the absence of ATP, only oligopeptides shorter than five residues are hydrolyzed (such as succinyl-Leu-Tyr-|-NHMec, and Leu-Tyr-Leu-|-Tyr-Trp, in which cleavage of the -Tyr-|-Leu- and -Tyr-|-Trp bonds also occurs).. Cleaves peptides in various proteins in a process that requires ATP hydrolysis. Has a chymotrypsin-like activity. Plays a major role in the degradation of misfolded proteins. The sequence is that of ATP-dependent Clp protease proteolytic subunit 1 from Synechococcus sp. (strain CC9902).